Reading from the N-terminus, the 238-residue chain is Large ribosomal subunit protein uL1 (238 aa).

It belongs to the universal ribosomal protein uL1 family. As to quaternary structure, part of the 50S ribosomal subunit.

Functionally, binds directly to 23S rRNA. The L1 stalk is quite mobile in the ribosome, and is involved in E site tRNA release. Its function is as follows. Protein L1 is also a translational repressor protein, it controls the translation of the L11 operon by binding to its mRNA. The protein is Large ribosomal subunit protein uL1 of Rickettsia prowazekii (strain Madrid E).